The following is a 283-amino-acid chain: NAD kinase (283 aa).

D65 (proton acceptor) is an active-site residue. NAD(+) contacts are provided by residues 65-66, 139-140, R150, R167, D169, 180-185, and Q239; these read DG, ND, and TGYSVS.

It belongs to the NAD kinase family. A divalent metal cation serves as cofactor.

The protein resides in the cytoplasm. It carries out the reaction NAD(+) + ATP = ADP + NADP(+) + H(+). Involved in the regulation of the intracellular balance of NAD and NADP, and is a key enzyme in the biosynthesis of NADP. Catalyzes specifically the phosphorylation on 2'-hydroxyl of the adenosine moiety of NAD to yield NADP. The sequence is that of NAD kinase from Nitratidesulfovibrio vulgaris (strain DSM 19637 / Miyazaki F) (Desulfovibrio vulgaris).